The chain runs to 576 residues: 4-alpha-glucanotransferase DPE1, chloroplastic/amyloplastic (576 aa).

A chloroplast-targeting transit peptide spans 1 to 45 (MSILLRPSSSPSLCSSLKLFRLSSPDSLIDAAVLRNRTKPSQSFR).

The protein belongs to the disproportionating enzyme family.

The protein resides in the plastid. Its subcellular location is the chloroplast. The protein localises to the amyloplast. It carries out the reaction Transfers a segment of a (1-&gt;4)-alpha-D-glucan to a new position in an acceptor, which may be glucose or a (1-&gt;4)-alpha-D-glucan.. Chloroplastic alpha-glucanotransferase involved in maltotriose metabolism. Probably uses maltotriose as substrate to transfer a maltosyl unit from one molecule to another, resulting in glucose and maltopentaose. The latter can then be further metabolized to maltose and maltotriose by beta-amylase. Required for normal starch degradation in leaves. The sequence is that of 4-alpha-glucanotransferase DPE1, chloroplastic/amyloplastic (DPE1) from Arabidopsis thaliana (Mouse-ear cress).